A 457-amino-acid chain; its full sequence is C4-dicarboxylate transport protein (457 aa).

9 helical membrane-spanning segments follow: residues 22 to 42, 55 to 75, 90 to 110, 138 to 158, 168 to 188, 209 to 229, 242 to 262, 335 to 357, and 376 to 396; these read FQVVVAIILGALLGRFEPAFA, LVKMIIAPVIFLTIVTGIAGM, VYFLFFSTLALVVGLVVAHVV, LTLVGFLMDIIPNSLIGAFTG, GPNILQVLFVAVLFGVSLALV, LVHILMRAAPIGAFGAIAFTI, WLVGSFYLTSLLFVLVILGVV, LFIAQATNTELTLGHQIALLAVA, and AATLAVVPEVPVAGMALILGV.

Belongs to the dicarboxylate/amino acid:cation symporter (DAACS) (TC 2.A.23) family.

It localises to the cell inner membrane. Its function is as follows. Responsible for the transport of dicarboxylates such as succinate, fumarate, and malate from the periplasm across the membrane. This chain is C4-dicarboxylate transport protein, found in Xanthomonas oryzae pv. oryzae (strain MAFF 311018).